Here is a 154-residue protein sequence, read N- to C-terminus: Myoglobin (154 aa).

In terms of domain architecture, Globin spans 2–148 (GLSDAEWQLV…FRNDIAAKYK (147 aa)). Position 4 is a phosphoserine (serine 4). Nitrite is bound at residue histidine 65. Histidine 65 serves as a coordination point for O2. A Phosphothreonine modification is found at threonine 68. Histidine 94 contributes to the heme b binding site.

The protein belongs to the globin family. Monomeric.

Its subcellular location is the cytoplasm. The protein resides in the sarcoplasm. It catalyses the reaction Fe(III)-heme b-[protein] + nitric oxide + H2O = Fe(II)-heme b-[protein] + nitrite + 2 H(+). The enzyme catalyses H2O2 + AH2 = A + 2 H2O. In terms of biological role, monomeric heme protein which primary function is to store oxygen and facilitate its diffusion within muscle tissues. Reversibly binds oxygen through a pentacoordinated heme iron and enables its timely and efficient release as needed during periods of heightened demand. Depending on the oxidative conditions of tissues and cells, and in addition to its ability to bind oxygen, it also has a nitrite reductase activity whereby it regulates the production of bioactive nitric oxide. Under stress conditions, like hypoxia and anoxia, it also protects cells against reactive oxygen species thanks to its pseudoperoxidase activity. This Orycteropus afer (Aardvark) protein is Myoglobin (MB).